The sequence spans 242 residues: MTFIKGLPLMLLTISLGCNAAVQPDRTRIVFNANDKATSLRIENQSDKLPYLAYSWIENEKGEKSDALLVALPPIQRLEPKATSQVRVVKQASTTQLPGDRETLFFYNMREIPPAPDKSSDHAILQVAIQSRIKLFWRPAALRKKAGEKVELQLQVSQQGNQLTLKNPTAYYLTIAYLGRNEKGVLPGFKTVMVAPFSTVNTNTGSYSGSQFYLGYMDDYGALRMTTLNCSGQCRLQAVEAK.

The signal sequence occupies residues 1-20 (MTFIKGLPLMLLTISLGCNA).

Belongs to the periplasmic pilus chaperone family.

The protein resides in the periplasm. In terms of biological role, could be required for the biogenesis of the putative YbgD fimbria. This is an uncharacterized protein from Escherichia coli (strain K12).